A 351-amino-acid polypeptide reads, in one-letter code: Beta-hexosaminidase (351 aa).

Substrate is bound by residues Asp-62, Arg-70, Arg-134, and Lys-164–His-165. Residue His-177 is the Proton donor/acceptor of the active site. Asp-249 serves as the catalytic Nucleophile.

It belongs to the glycosyl hydrolase 3 family. NagZ subfamily.

Its subcellular location is the cytoplasm. It carries out the reaction Hydrolysis of terminal non-reducing N-acetyl-D-hexosamine residues in N-acetyl-beta-D-hexosaminides.. The protein operates within cell wall biogenesis; peptidoglycan recycling. Functionally, plays a role in peptidoglycan recycling by cleaving the terminal beta-1,4-linked N-acetylglucosamine (GlcNAc) from peptide-linked peptidoglycan fragments, giving rise to free GlcNAc, anhydro-N-acetylmuramic acid and anhydro-N-acetylmuramic acid-linked peptides. This Histophilus somni (strain 129Pt) (Haemophilus somnus) protein is Beta-hexosaminidase.